The chain runs to 221 residues: Iron-sulfur cluster repair protein YtfE (221 aa).

The protein belongs to the RIC family. YtfE subfamily. As to quaternary structure, homodimer.

The protein resides in the cytoplasm. In terms of biological role, di-iron-containing protein involved in the repair of iron-sulfur clusters damaged by oxidative and nitrosative stress conditions. The chain is Iron-sulfur cluster repair protein YtfE from Pectobacterium carotovorum subsp. carotovorum (strain PC1).